Reading from the N-terminus, the 184-residue chain is H(2)/formate:CoB-CoM heterodisulfide,ferredoxin reductase subunit C2 (184 aa).

4Fe-4S ferredoxin-type domains are found at residues 24–54 (GEKE…AYRT) and 65–97 (IDSV…TEII). Positions 34, 37, 40, 44, 77, 80, 83, and 87 each coordinate [4Fe-4S] cluster.

The protein belongs to the HdrC family. The heterodisulfide reductase is composed of three subunits; HdrA, HdrB and HdrC. B1 and B2 subunits are interchangeable, as are the C1 and C2 subunits. The heterodisulfide reductase forms a supercomplex with formylmethanofuran dehydrogenase (Fwd), F(420)-non-reducing hydrogenase (Vhu) and formate dehydrogenase (Fdh). [4Fe-4S] cluster is required as a cofactor.

It carries out the reaction coenzyme B + coenzyme M + 2 reduced [2Fe-2S]-[ferredoxin] + 2 H(+) = coenzyme M-coenzyme B heterodisulfide + 2 H2 + 2 oxidized [2Fe-2S]-[ferredoxin]. The enzyme catalyses coenzyme B + coenzyme M + 2 reduced [2Fe-2S]-[ferredoxin] + 2 CO2 = coenzyme M-coenzyme B heterodisulfide + 2 formate + 2 oxidized [2Fe-2S]-[ferredoxin]. It participates in cofactor metabolism; coenzyme M-coenzyme B heterodisulfide reduction; coenzyme B and coenzyme M from coenzyme M-coenzyme B heterodisulfide: step 1/1. Part of a complex that catalyzes the reversible reduction of CoM-S-S-CoB to the thiol-coenzymes H-S-CoM (coenzyme M) and H-S-CoB (coenzyme B). This is H(2)/formate:CoB-CoM heterodisulfide,ferredoxin reductase subunit C2 from Methanococcus maripaludis (strain DSM 14266 / JCM 13030 / NBRC 101832 / S2 / LL).